The primary structure comprises 678 residues: MADRRRRRRRAFQDSEEEEDEESGSESAGSGGQPAAPSRQESREPGTKRAEPPREGKESECESEDGIEGDAVLSDYESAESEEEEAHLSEEEPLKTTLKQENNVEEAPATREQKPKSKGAVTGERQSGDGQESTEPEENKTSKKSQKQLDDDEDRKNPAYIPRKGLFFEHDLRGHVNDEEVRPKGRHPRKLWKDEGRWEHDRFREDEQAPKSREELISIYGYDIRSSKNSEEIRPRRPRKPRFGSPTRREEISEKPSRPSNRYQDSGISQPLRPYTNRNAPPSNKVGPSRTYSRQGGYKENRSSYQSEEEAPPHPSERRQDYGGHRARSTEQGPAPPREFSPEADPIIKEEPVIEKQAAEPSPPPPDRPVEKKSYSRVRRSRIKVGDTGKSMEDTTVTELPPPPPVPPAVAAEFTPAPLNVKQGNWEPPSEGGMSGIEEELSQMNLSEQSWNPGQPAYISPRGIPNPMHMGGGPPQYNRMEGMAVQGGRVKRYSTQRQRPVPDPAAMHISLMESHYYDPLQFQGPIYAHGDSPSSMPPQGMIVQPEMHLSHPGIHPHQPPATISTPNLYPAPVSLPPGQPPPQQLLPPPYFTAPPNVMNFGNPTYPYPPGALPPPPAHLYPNAQAQSQVYGGVTYYNPVQQQVQPKPSPPRRTSQPVTIKPPPPEENRHVKMKEKSNS.

A compositionally biased stretch (basic residues) spans 1–10; sequence MADRRRRRRR. Disordered regions lie at residues 1–412 and 637–678; these read MADR…AVAA and NPVQ…KSNS. Residues 14-24 show a composition bias toward acidic residues; the sequence is DSEEEEDEESG. Residues 25-38 are compositionally biased toward low complexity; sequence SESAGSGGQPAAPS. Over residues 40–60 the composition is skewed to basic and acidic residues; that stretch reads QESREPGTKRAEPPREGKESE. Residues 124–133 show a composition bias toward polar residues; the sequence is ERQSGDGQES. Basic and acidic residues-rich tracts occupy residues 166–183, 191–216, 225–235, and 247–257; these read LFFE…EVRP, LWKD…REEL, RSSKNSEEIRP, and TRREEISEKPS. Residues 258–269 show a composition bias toward polar residues; it reads RPSNRYQDSGIS. Basic and acidic residues-rich tracts occupy residues 311–324, 346–358, 384–393, and 663–678; these read APPH…DYGG, PIIK…EKQA, KVGDTGKSME, and PPEE…KSNS.

It belongs to the CASC3 family. In terms of assembly, identified in the spliceosome C complex. Component of the mRNA splicing-dependent exon junction complex (EJC), which contains at least casc3, eif4a3, magoh, nxf1 and rbm8a. Forms homooligomers.

Its subcellular location is the cytoplasm. It is found in the perinuclear region. The protein resides in the nucleus. The protein localises to the nucleus speckle. It localises to the stress granule. Its subcellular location is the cytoplasmic ribonucleoprotein granule. It is found in the cell projection. The protein resides in the dendrite. Its function is as follows. Required for pre-mRNA splicing as component of the spliceosome. Core component of the splicing-dependent multiprotein exon junction complex (EJC) deposited at splice junctions on mRNAs. The EJC is a dynamic structure consisting of core proteins and several peripheral nuclear and cytoplasmic associated factors that join the complex only transiently either during EJC assembly or during subsequent mRNA metabolism. The EJC marks the position of the exon-exon junction in the mature mRNA for the gene expression machinery and the core components remain bound to spliced mRNAs throughout all stages of mRNA metabolism thereby influencing downstream processes including nuclear mRNA export, subcellular mRNA localization, translation efficiency and nonsense-mediated mRNA decay (NMD). Binds spliced mRNA in sequence-independent manner, 20-24 nucleotides upstream of mRNA exon-exon junctions. This is Protein CASC3 (casc3) from Xenopus tropicalis (Western clawed frog).